A 410-amino-acid chain; its full sequence is Cathepsin D (410 aa).

A signal peptide spans 1 to 18 (MQPPSLLLLVLGLLAAPA). Positions 19–64 (AALVRIPLHKFTSVRRTMTELGGPVEDLIAKGPISKYAQGAPAVTG) are cleaved as a propeptide — activation peptide. The 327-residue stretch at 79–405 (YYGEIGIGTP…DRDQNRVGLA (327 aa)) folds into the Peptidase A1 domain. Intrachain disulfides connect Cys-91–Cys-160 and Cys-110–Cys-117. Residue Asp-97 is part of the active site. N-linked (GlcNAc...) asparagine glycans are attached at residues Asn-134 and Asn-261. A disulfide bridge links Cys-284 with Cys-288. Asp-293 is a catalytic residue. Cys-327 and Cys-364 are oxidised to a cystine.

The protein belongs to the peptidase A1 family. Consists of a light chain and a heavy chain. Interacts with ADAM30; this leads to activation of CTSD. Interacts with GRN; stabilizes CTSD; increases its proteolytic activity. In terms of processing, N- and O-glycosylated. Post-translationally, undergoes proteolytic cleavage and activation by ADAM30.

It localises to the lysosome. The protein localises to the melanosome. It is found in the secreted. Its subcellular location is the extracellular space. The catalysed reaction is Specificity similar to, but narrower than, that of pepsin A. Does not cleave the 4-Gln-|-His-5 bond in B chain of insulin.. Its function is as follows. Acid protease active in intracellular protein breakdown. Plays a role in APP processing following cleavage and activation by ADAM30 which leads to APP degradation. This is Cathepsin D (CTSD) from Canis lupus familiaris (Dog).